We begin with the raw amino-acid sequence, 708 residues long: Ion-translocating oxidoreductase complex subunit C (708 aa).

4Fe-4S ferredoxin-type domains are found at residues 369 to 397 and 407 to 436; these read GEPQEEQSCIRCSACADACPADLLPQQLY and KATTHNIADCIECGACAWVCPSNIPLVQYF. [4Fe-4S] cluster is bound by residues Cys377, Cys380, Cys383, Cys387, Cys416, Cys419, Cys422, and Cys426. The tract at residues 630–682 is disordered; sequence AKARKLEQQQANAEPEEQIDPRKAAVEAAIARAKARKLEQQQANAEPEEQIDP.

This sequence belongs to the 4Fe4S bacterial-type ferredoxin family. RnfC subfamily. In terms of assembly, the complex is composed of six subunits: RsxA, RsxB, RsxC, RsxD, RsxE and RsxG. The cofactor is [4Fe-4S] cluster.

It is found in the cell inner membrane. Its function is as follows. Part of a membrane-bound complex that couples electron transfer with translocation of ions across the membrane. Required to maintain the reduced state of SoxR. The sequence is that of Ion-translocating oxidoreductase complex subunit C from Escherichia coli (strain UTI89 / UPEC).